The following is a 212-amino-acid chain: Peptide methionine sulfoxide reductase MsrA (212 aa).

The active site involves Cys-52.

Belongs to the MsrA Met sulfoxide reductase family.

It carries out the reaction L-methionyl-[protein] + [thioredoxin]-disulfide + H2O = L-methionyl-(S)-S-oxide-[protein] + [thioredoxin]-dithiol. The enzyme catalyses [thioredoxin]-disulfide + L-methionine + H2O = L-methionine (S)-S-oxide + [thioredoxin]-dithiol. Has an important function as a repair enzyme for proteins that have been inactivated by oxidation. Catalyzes the reversible oxidation-reduction of methionine sulfoxide in proteins to methionine. The polypeptide is Peptide methionine sulfoxide reductase MsrA (Salmonella paratyphi A (strain AKU_12601)).